Reading from the N-terminus, the 121-residue chain is NAD(P)H-quinone oxidoreductase subunit M (121 aa).

It belongs to the complex I NdhM subunit family. In terms of assembly, NDH-1 can be composed of about 15 different subunits; different subcomplexes with different compositions have been identified which probably have different functions.

The protein resides in the cellular thylakoid membrane. It catalyses the reaction a plastoquinone + NADH + (n+1) H(+)(in) = a plastoquinol + NAD(+) + n H(+)(out). The enzyme catalyses a plastoquinone + NADPH + (n+1) H(+)(in) = a plastoquinol + NADP(+) + n H(+)(out). Functionally, NDH-1 shuttles electrons from an unknown electron donor, via FMN and iron-sulfur (Fe-S) centers, to quinones in the respiratory and/or the photosynthetic chain. The immediate electron acceptor for the enzyme in this species is believed to be plastoquinone. Couples the redox reaction to proton translocation, and thus conserves the redox energy in a proton gradient. Cyanobacterial NDH-1 also plays a role in inorganic carbon-concentration. The sequence is that of NAD(P)H-quinone oxidoreductase subunit M from Synechococcus sp. (strain JA-3-3Ab) (Cyanobacteria bacterium Yellowstone A-Prime).